The primary structure comprises 482 residues: Ras GTPase-activating protein-binding protein 2 (482 aa).

In terms of domain architecture, NTF2 spans 11 to 133 (VGREFVRQYY…FYVHNDMFRY (123 aa)). Residues 140–158 (DSEPELDEESEDEVEEEQE) are compositionally biased toward acidic residues. Disordered regions lie at residues 140–171 (DSEPELDEESEDEVEEEQEERQPSPEPVQENA) and 187–318 (EPLE…EQND). Ser141, Ser149, and Ser225 each carry phosphoserine. The segment at 142-220 (EPELDEESED…PQVEEKNLEE (79 aa)) is acidic disordered region. Residues 191-225 (ESSHEPEPEPESETKTEELKPQVEEKNLEELEEKS) show a composition bias toward basic and acidic residues. Position 227 is a phosphothreonine (Thr227). The residue at position 235 (Ser235) is a Phosphoserine. A compositionally biased stretch (polar residues) spans 247–264 (ASVTSKNLPPSGTVSSSG). Residue Lys281 forms a Glycyl lysine isopeptide (Lys-Gly) (interchain with G-Cter in SUMO2) linkage. Basic and acidic residues predominate over residues 290–300 (RVREQRPRERP). Positions 331-409 (HQLFVGNLPH…VRLNVEEKKT (79 aa)) constitute an RRM domain. Lys392 carries the post-translational modification N6-succinyllysine. The tract at residues 404-476 (VEEKKTRAAR…GRGTGQMEGR (73 aa)) is RG-rich region. A compositionally biased stretch (basic and acidic residues) spans 408–432 (KTRAARERETRGGGDDRRDIRRNDR). Residues 408 to 482 (KTRAARERET…MEGRFTGQRR (75 aa)) are disordered. Residues 433 to 445 (GPGGPRGIVGGGM) are compositionally biased toward gly residues. The residue at position 457 (Arg457) is an Omega-N-methylarginine. At Ser466 the chain carries Phosphoserine. Arg468 is modified (omega-N-methylarginine).

As to quaternary structure, forms homooligomers. Forms heterodimers with G3BP1. Interacts with NFKBIA (via N-terminus). Interacts (via NTF2 domain) with USP10; inhibiting stress granule formation. Interacts (via NTF2 domain) with CAPRIN1; promoting stress granule formation. Associates (via RG-rich region) with 40S ribosome subunits. Interacts with PABPC1. In terms of assembly, (Microbial infection) Interacts with non-structural protein 3 (via C-terminus) of Sindbis virus and Semliki forest virus; this interaction inhibits the formation of host stress granules on viral mRNAs and the nsp3-G3BP2 complexes bind viral RNAs and probably orchestrate the assembly of viral replication complexes. In terms of processing, (Microbial infection) Cleaved by foot-and-mouth disease virus leader protease; this cleavage suppresses the formation of cytoplasmic stress granules.

The protein resides in the cytoplasm. The protein localises to the stress granule. Under physiological conditions, G3BP2 adopts a compact state that is stabilized by intramolecular interactions between the RG-rich and the acidic regions that inhibit phase separation. Upon stress, polysomes disassemble and mRNAs are released in an unfolded protein-free state. Binding of unfolded mRNA to G3BP2 outcompetes the intramolecular interactions and RNA-bound G3BP2 adopts an expanded conformation in which the RG-rich region becomes exposed to engage in protein-protein and protein-RNA interactions, allowing physical cross-linking of RNA molecules to form protein-RNA condensates, leading to liquid-liquid phase separation (LLPS). In terms of biological role, scaffold protein that plays an essential role in cytoplasmic stress granule formation which acts as a platform for antiviral signaling. Plays an essential role in stress granule formation. Stress granules are membraneless compartments that store mRNAs and proteins, such as stalled translation pre-initiation complexes, in response to stress. Promotes formation of stress granules phase-separated membraneless compartment by undergoing liquid-liquid phase separation (LLPS) upon unfolded RNA-binding: functions as a molecular switch that triggers RNA-dependent LLPS in response to a rise in intracellular free RNA concentrations. This Homo sapiens (Human) protein is Ras GTPase-activating protein-binding protein 2.